Here is a 591-residue protein sequence, read N- to C-terminus: Protein enabled homolog (591 aa).

In terms of domain architecture, WH1 spans 1–111 (MSEQSICQAR…SAMMHALEVL (111 aa)). Residues 115-136 (ETGPTLPRQNSQLPAQVQNGPS) are compositionally biased toward polar residues. The segment at 115–146 (ETGPTLPRQNSQLPAQVQNGPSQEELEIQRRQ) is disordered. Residue Ser125 is modified to Phosphoserine. Residues 135–265 (PSQEELEIQR…LEWERERRIS (131 aa)) are a coiled coil. 9 tandem repeats follow at residues 156–160 (LERER), 161–165 (LERER), 166–170 (MERER), 171–175 (LERER), 176–180 (LERER), 181–185 (LERER), 186–190 (LEQEQ), 191–195 (LERER), and 196–200 (QERER). Residues 156–200 (LERERLERERMERERLERERLERERLERERLEQEQLERERQERER) are 9 X 5 AA tandem repeats of [LMQ]-E-[QR]-E-[QR]. Basic and acidic residues predominate over residues 221–264 (RLDRERQERQERERLERLERERQERERQEQLEREQLEWERERRI). A disordered region spans residues 221-379 (RLDRERQERQ…PPLPASGFFL (159 aa)). The residue at position 265 (Ser265) is a Phosphoserine; by PKA. Positions 275 to 305 (TPLNSVLGDSSASEPGLQAASQPAETPSQQG) are enriched in polar residues. Pro residues-rich tracts occupy residues 311–323 (LAPP…PPGP) and 330–373 (LPPP…PPLP). Positions 391 to 411 (GLAAAIAGAKLRKVSRMEDTS) are EVH2 block A. An EVH2 region spans residues 391-588 (GLAAAIAGAK…DAIRQELSKS (198 aa)). The KLKR motif lies at 400-403 (KLRK). A disordered region spans residues 405–549 (SRMEDTSFPS…LSQPSANGVQ (145 aa)). The span at 432-443 (RGNGPLPLGGSG) shows a compositional bias: gly residues. The EVH2 block B stretch occupies residues 442–459 (SGLMEEMSALLARRRRIA). Ile465 bears the Phosphothreonine mark. Phosphoserine is present on residues Glu471 and Glu475. Polar residues-rich tracts occupy residues 479 to 491 (PVTS…STPE) and 499 to 509 (RTNTMNGSKSP). Thr502 is subject to Phosphothreonine. A phosphoserine mark is found at Ser506, Ser508, and Ser512. A compositionally biased stretch (polar residues) spans 538–549 (TPLSQPSANGVQ). The interval 554 to 588 (DYDRLKQDILDEMRKELTKLKEELIDAIRQELSKS) is EVH2 block C. A coiled-coil region spans residues 557–587 (RLKQDILDEMRKELTKLKEELIDAIRQELSK).

The protein belongs to the Ena/VASP family. As to quaternary structure, homotetramer. Interacts with APBB1IP, APBB1, PFN1 and ROBO4. Isoforms, containing the polyproline-rich regions with PPLP motifs, bind the WW domain of APBB1IP. Isoforms, containing the PPSY motif, bind, in vitro, to the WW2 and WW3 domains of NEDD4 and to the WW1 domain of YAP1. Binds the SH3 domain of BAIAP2-alpha but only after the autoinhibitory region of BAIAP2-alpha has been blocked by interaction with CDC42. Interacts, via the EVH1/WH1 domain, with the Pro-rich domains from VCL, ZYX and Listeria monocytogenes actA and with TES (via LIM domains). The TES LIM domain and the Pro-rich domains from VCL or ZYX compete for the same binding site. Interaction with ZYX is important for targeting ENAH to focal adhesions and enhances production of actin-rich structures at the apical surface of cells. Interacts, through the Pro-rich region, with the C-terminal SH3 domain of DNMPB. Binds GPHN. Interacts with FAT1 (via EVH1 domains). Heterotrimer with TES and ACTL7A. Interacts with PRPF40A. In terms of processing, NTN1-induced PKA phosphorylation on Ser-265 directly parallels the formation of filopodial protrusions. In terms of tissue distribution, expressed in myoepithelia of parotid, breast, bronchial glands and sweat glands. Expressed in colon-rectum muscolaris mucosae epithelium, pancreas acinar ductal epithelium, endometrium epithelium, prostate fibromuscolar stroma and placenta vascular media. Overexpressed in a majority of breast cancer cell lines and primary breast tumor lesions.

It is found in the cytoplasm. The protein resides in the cytoskeleton. The protein localises to the cell projection. It localises to the lamellipodium. Its subcellular location is the filopodium. It is found in the synapse. The protein resides in the cell junction. The protein localises to the focal adhesion. Its function is as follows. Ena/VASP proteins are actin-associated proteins involved in a range of processes dependent on cytoskeleton remodeling and cell polarity such as axon guidance and lamellipodial and filopodial dynamics in migrating cells. ENAH induces the formation of F-actin rich outgrowths in fibroblasts. Acts synergistically with BAIAP2-alpha and downstream of NTN1 to promote filipodia formation. In Homo sapiens (Human), this protein is Protein enabled homolog (ENAH).